A 281-amino-acid polypeptide reads, in one-letter code: Putative dehydrogenase/reductase SDR family member 4-like 1 (281 aa).

36-60 (LVTASTDWIGFAVAQRLAQDGAHVV) serves as a coordination point for NADP(+). Residue Ser172 participates in substrate binding. Residue Tyr185 is the Proton acceptor of the active site. NADP(+) is bound at residue Lys189. The short motif at 279–281 (SRL) is the Peroxisomal targeting signal element.

The protein belongs to the short-chain dehydrogenases/reductases (SDR) family.

In terms of biological role, putative oxidoreductase. This Homo sapiens (Human) protein is Putative dehydrogenase/reductase SDR family member 4-like 1.